An 825-amino-acid chain; its full sequence is Taste receptor cell protein 1 (825 aa).

The signal sequence occupies residues 1 to 21 (MDKQWFPAAGILLAALLVVSA). Disordered stretches follow at residues 66–97 (EREPEALGRRAGGLSTEGAGGQESPSMPGPSG) and 299–322 (TSPSQASSLHSPRPSSASPLSASP). Residues 302–322 (SQASSLHSPRPSSASPLSASP) show a composition bias toward low complexity.

In terms of tissue distribution, expression is restricted to circumvallate papillae.

The sequence is that of Taste receptor cell protein 1 (Trcg1) from Mus musculus (Mouse).